Reading from the N-terminus, the 488-residue chain is UDP-glycosyltransferase 73B1 (488 aa).

Residues threonine 297, 356 to 358 (APQ), 373 to 381 (HCGWNSLLE), and 395 to 398 (GAEQ) contribute to the UDP-alpha-D-glucose site.

It belongs to the UDP-glycosyltransferase family.

Its function is as follows. Possesses low quercetin 3-O-glucosyltransferase and 7-O-glucosyltransferase activities in vitro. This is UDP-glycosyltransferase 73B1 (UGT73B1) from Arabidopsis thaliana (Mouse-ear cress).